A 635-amino-acid chain; its full sequence is PTS system mannitol-specific EIICBA component (635 aa).

Positions 12–342 (FGRFLSNMVM…LFKTSKVKER (331 aa)) constitute a PTS EIIC type-2 domain. 6 consecutive transmembrane segments (helical) span residues 24–45 (IGAFIAWGIITALFIPTGWLPN), 50–70 (KLVGPMITYLLPLLIGYTGGK), 134–155 (SAGIIGMILAILAFLGIGPAVE), 165–185 (VNFMVAHDMLPLASIFVEPAK), 273–292 (VILGGMTGVFTLTILNGGLV), and 313–334 (FANIAAIIAAMAVSFVVSAVLF). The PTS EIIB type-2 domain occupies 378-473 (RKIIVACDAG…RLVAAQRHID (96 aa)). C384 functions as the Phosphocysteine intermediate; for EIIB activity in the catalytic mechanism. C384 is subject to Phosphocysteine; by EIIA. In terms of domain architecture, PTS EIIA type-2 spans 494–635 (FQLGADNIFL…VDEVLALLNK (142 aa)). Residue H554 is the Tele-phosphohistidine intermediate; for EIIA activity of the active site. At H554 the chain carries Phosphohistidine; by HPr.

In terms of assembly, homodimer. Post-translationally, an intramolecular phosphotransfer takes places between His-554 and Cys-384.

It is found in the cell inner membrane. It carries out the reaction D-mannitol(out) + N(pros)-phospho-L-histidyl-[protein] = D-mannitol 1-phosphate(in) + L-histidyl-[protein]. Its function is as follows. The phosphoenolpyruvate-dependent sugar phosphotransferase system (sugar PTS), a major carbohydrate active transport system, catalyzes the phosphorylation of incoming sugar substrates concomitantly with their translocation across the cell membrane. This system is involved in D-mannitol transport. In Klebsiella pneumoniae, this protein is PTS system mannitol-specific EIICBA component.